The primary structure comprises 94 residues: Venom protein 59.1 (94 aa).

Positions 1-22 (MNSREMFCVFILFASFFYCSYA) are cleaved as a signal peptide. 6 disulfides stabilise this stretch: C19–C47, C26–C49, C32–C50, C38–C53, C61–C76, and C70–C91. Residues 23–94 (EQECNCDKSC…GEALEICLRA (72 aa)) enclose the IGFBP N-terminal domain.

Expressed by the venom gland.

It localises to the secreted. The polypeptide is Venom protein 59.1 (Lychas mucronatus (Chinese swimming scorpion)).